The following is a 374-amino-acid chain: LRR repeats and ubiquitin-like domain-containing protein At2g30105 (374 aa).

The region spanning 13-87 is the Ubiquitin-like domain; it reads IKLTVKFGGK…LMLMASQGLH (75 aa). 9 LRR repeats span residues 128-151, 152-175, 177-200, 201-224, 225-248, 250-270, 272-293, 294-316, and 318-340; these read WKAT…VWDC, GSGV…ISSF, SMQK…GIAS, LKRL…MGSL, TSLR…GLLT, LEIL…IGNC, FLME…FTKL, RNLK…LFKM, and LQLS…QFEG.

The chain is LRR repeats and ubiquitin-like domain-containing protein At2g30105 from Arabidopsis thaliana (Mouse-ear cress).